Reading from the N-terminus, the 126-residue chain is Small ribosomal subunit protein uS8 (126 aa).

It belongs to the universal ribosomal protein uS8 family. As to quaternary structure, part of the 30S ribosomal subunit. Contacts proteins S5 and S12.

Its function is as follows. One of the primary rRNA binding proteins, it binds directly to 16S rRNA central domain where it helps coordinate assembly of the platform of the 30S subunit. The chain is Small ribosomal subunit protein uS8 from Oleidesulfovibrio alaskensis (strain ATCC BAA-1058 / DSM 17464 / G20) (Desulfovibrio alaskensis).